A 206-amino-acid chain; its full sequence is Large ribosomal subunit protein uL4 (206 aa).

The disordered stretch occupies residues 43–78 (ARSGNRKQKDREEVKHTTKKPWRQKGTGRARAGMSS). The span at 49–58 (KQKDREEVKH) shows a compositional bias: basic and acidic residues. The span at 59 to 70 (TTKKPWRQKGTG) shows a compositional bias: basic residues.

Belongs to the universal ribosomal protein uL4 family. In terms of assembly, part of the 50S ribosomal subunit.

In terms of biological role, one of the primary rRNA binding proteins, this protein initially binds near the 5'-end of the 23S rRNA. It is important during the early stages of 50S assembly. It makes multiple contacts with different domains of the 23S rRNA in the assembled 50S subunit and ribosome. Its function is as follows. Forms part of the polypeptide exit tunnel. The polypeptide is Large ribosomal subunit protein uL4 (Ralstonia nicotianae (strain ATCC BAA-1114 / GMI1000) (Ralstonia solanacearum)).